Here is a 467-residue protein sequence, read N- to C-terminus: Dimethylamine methyltransferase MtbB1 (467 aa).

Pyrrolysine 356 is a non-standard amino acid (pyrrolysine).

It belongs to the dimethylamine methyltransferase family.

The catalysed reaction is Co(I)-[dimethylamine-specific corrinoid protein] + dimethylamine + H(+) = methyl-Co(III)-[dimethylamine-specific corrinoid protein] + methylamine. Its pathway is one-carbon metabolism; methanogenesis from dimethylamine. Catalyzes the transfer of a methyl group from dimethylamine to the corrinoid cofactor of MtbC. This Methanosarcina acetivorans (strain ATCC 35395 / DSM 2834 / JCM 12185 / C2A) protein is Dimethylamine methyltransferase MtbB1 (mtbB1).